A 223-amino-acid polypeptide reads, in one-letter code: Endonuclease V (223 aa).

Asp-35 and Asp-103 together coordinate Mg(2+).

The protein belongs to the endonuclease V family. The cofactor is Mg(2+).

The protein localises to the cytoplasm. It catalyses the reaction Endonucleolytic cleavage at apurinic or apyrimidinic sites to products with a 5'-phosphate.. DNA repair enzyme involved in the repair of deaminated bases. Selectively cleaves double-stranded DNA at the second phosphodiester bond 3' to a deoxyinosine leaving behind the intact lesion on the nicked DNA. In Salmonella enteritidis PT4 (strain P125109), this protein is Endonuclease V.